The following is a 982-amino-acid chain: ATP-dependent DNA helicase Q5 (982 aa).

The Helicase ATP-binding domain maps to 39-213; that stretch reads MAVVKGAEDV…FAALHLKQPV (175 aa). Residue 52–59 participates in ATP binding; it reads MPTGAGKS. The DEAH box motif lies at 157–160; that stretch reads DEAH. The Helicase C-terminal domain occupies 241–398; that stretch reads NLRDFCLKAL…NKPSDKATLL (158 aa). Residues Cys412, Cys428, Cys432, and Cys435 each contribute to the Zn(2+) site. Phosphoserine occurs at positions 489 and 492. An interaction with POLR2A region spans residues 491-621; it reads GSGDEGRDEA…ASKDGQLYDM (131 aa). Thr527 is subject to Phosphothreonine. The interval 653-726 is interaction with RAD51; that stretch reads PKRVGAGFSK…ALGSSVNCGD (74 aa). Disordered stretches follow at residues 675-797 and 812-893; these read GKSH…PGKC and QTEG…AQEP. Ser728 carries the post-translational modification Phosphoserine; by CDK1.

This sequence belongs to the helicase family. RecQ subfamily. Monomer. Interacts with TOP2A, TOP3A and TOP3B. Interacts with RNA polymerase II subunit POLR2A. Identified in a complex with the RNA polymerase II core bound to DNA. Interacts with RAD51. Interacts with WRN; this interaction stimulates WRN helicase activity on DNA fork duplexes. Interacts with MUS1; this interaction promotes MUS81-dependent mitotic DNA synthesis. Requires Zn(2+) as cofactor. Phosphorylated by CDK1 at Ser-728; this phosphorylation is required for RECQL5-mediated disruption of RAD51 filaments on stalled replication forks.

It is found in the nucleus. Its subcellular location is the nucleoplasm. It carries out the reaction Couples ATP hydrolysis with the unwinding of duplex DNA by translocating in the 3'-5' direction.. The catalysed reaction is ATP + H2O = ADP + phosphate + H(+). In terms of biological role, DNA helicase that plays an important role in DNA replication, transcription and repair. Binds to the RNA polymerase II subunit POLR2A during transcription elongation and suppresses transcription-associated genomic instability. Also associates with POLR1A and enforces the stability of ribosomal DNA arrays. Plays an important role in mitotic chromosome separation after cross-over events and cell cycle progress. Mechanistically, removes RAD51 filaments protecting stalled replication forks at common fragile sites and stimulates MUS81-EME1 endonuclease leading to mitotic DNA synthesis. Required for efficient DNA repair, including repair of inter-strand cross-links. Stimulates DNA decatenation mediated by TOP2A. Prevents sister chromatid exchange and homologous recombination. The chain is ATP-dependent DNA helicase Q5 (Recql5) from Mus musculus (Mouse).